The following is a 48-amino-acid chain: Histone H4 (48 aa).

The span at 1–14 shows a compositional bias: gly residues; that stretch reads MGGKGGKGGKGLGK. Residues 1–23 form a disordered region; it reads MGGKGGKGGKGLGKVGAKKRHSR.

The protein belongs to the histone H4 family. In terms of assembly, the nucleosome is a histone octamer containing two molecules each of H2A, H2B, H3 and H4 assembled in one H3-H4 heterotetramer and two H2A-H2B heterodimers. The octamer wraps approximately 147 bp of DNA.

The protein localises to the nucleus. It localises to the chromosome. Core component of nucleosome. Nucleosomes wrap and compact DNA into chromatin, limiting DNA accessibility to the cellular machineries which require DNA as a template. Histones thereby play a central role in transcription regulation, DNA repair, DNA replication and chromosomal stability. DNA accessibility is regulated via a complex set of post-translational modifications of histones, also called histone code, and nucleosome remodeling. The chain is Histone H4 from Blepharisma japonicum.